We begin with the raw amino-acid sequence, 369 residues long: Omega-amidase, chloroplastic (369 aa).

The transit peptide at 1 to 63 (MKSAISSSLF…SALRSISSSM (63 aa)) directs the protein to the chloroplast. An N-acetylalanine modification is found at Ala-64. The region spanning 88-337 (FNIGLCQLSV…EAIIIAEIDY (250 aa)) is the CN hydrolase domain. The Proton acceptor role is filled by Glu-127. The active-site Proton donor is Lys-201. Catalysis depends on Cys-242, which acts as the Nucleophile.

It belongs to the nitrilase superfamily. NIT1/NIT2 family.

Its subcellular location is the plastid. The protein localises to the chloroplast. The catalysed reaction is a monoamide of a dicarboxylate + H2O = a dicarboxylate + NH4(+). Omega-amidase involved in the metabolism of asparagine. Probably also closely coupled with glutamine transamination in the methionine salvage cycle. Can use alpha-ketosuccinamate and alpha-hydroxysuccinamate as substrates, producing respectively oxaloacetate and malate, or alpha-ketoglutaramate, producing alpha-ketoglutarate. The sequence is that of Omega-amidase, chloroplastic from Arabidopsis thaliana (Mouse-ear cress).